The following is a 320-amino-acid chain: MESTDSSGGPPPPQPNLPPGFRFHPTDEELVIHYLKRKADSVPLPVAIIADVDLYKFDPWELPAKASFGEQEWYFFSPRDRKYPNGARPNRAATSGYWKATGTDKPVISTGGGGSKKVGVKKALVFYSGKPPKGVKSDWIMHEYRLTDNKPTHICDFGNKKNSLRLDDWVLCRIYKKNNSTASRHHHHLHHIHLDNDHHRHDMMIDDDRFRHVPPGLHFPAIFSDNNDPTAIYDGGGGGYGGGSYSMNHCFASGSKQEQLFPPVMMMTSLNQDSGIGSSSSPSKRFNGGGVGDCSTSMAATPLMQNQGGIYQLPGLNWYS.

The tract at residues 1–22 (MESTDSSGGPPPPQPNLPPGFR) is disordered. A compositionally biased stretch (pro residues) spans 9 to 18 (GPPPPQPNLP). Positions 17 to 177 (LPPGFRFHPT…DWVLCRIYKK (161 aa)) constitute an NAC domain. The DNA-binding element occupies 118–183 (VGVKKALVFY…IYKKNNSTAS (66 aa)).

In terms of tissue distribution, restricted primarily to the region of the embryo including the SAM. Expressed in the outer integument, but seems not expressed in the embryo at the torpedo stage.

Its subcellular location is the nucleus. In terms of biological role, may encode a transcription factor involved in the elaboration of shoot apical meristems (SAM). Together with NAC056/NARS1, regulates embryogenesis by regulating the development and degeneration of ovule integuments, a process required for intertissue communication between the embryo and the maternal integument. The protein is NAC domain-containing protein 18 (NAC018) of Arabidopsis thaliana (Mouse-ear cress).